The primary structure comprises 205 residues: ATP phosphoribosyltransferase (205 aa).

It belongs to the ATP phosphoribosyltransferase family. Short subfamily. Heteromultimer composed of HisG and HisZ subunits.

Its subcellular location is the cytoplasm. The enzyme catalyses 1-(5-phospho-beta-D-ribosyl)-ATP + diphosphate = 5-phospho-alpha-D-ribose 1-diphosphate + ATP. It participates in amino-acid biosynthesis; L-histidine biosynthesis; L-histidine from 5-phospho-alpha-D-ribose 1-diphosphate: step 1/9. Catalyzes the condensation of ATP and 5-phosphoribose 1-diphosphate to form N'-(5'-phosphoribosyl)-ATP (PR-ATP). Has a crucial role in the pathway because the rate of histidine biosynthesis seems to be controlled primarily by regulation of HisG enzymatic activity. The polypeptide is ATP phosphoribosyltransferase (Nitratiruptor sp. (strain SB155-2)).